A 205-amino-acid chain; its full sequence is Protein N-terminal glutamine amidohydrolase (205 aa).

Residues Cys-20, His-74, and Asp-90 contribute to the active site.

This sequence belongs to the NTAQ1 family. As to quaternary structure, monomer.

The catalysed reaction is N-terminal L-glutaminyl-[protein] + H2O = N-terminal L-glutamyl-[protein] + NH4(+). Mediates the side-chain deamidation of N-terminal glutamine residues to glutamate, an important step in N-end rule pathway of protein degradation. Conversion of the resulting N-terminal glutamine to glutamate renders the protein susceptible to arginylation, polyubiquitination and degradation as specified by the N-end rule. Does not act on substrates with internal or C-terminal glutamine and does not act on non-glutamine residues in any position. In Drosophila mojavensis (Fruit fly), this protein is Protein N-terminal glutamine amidohydrolase (tun).